The sequence spans 536 residues: Lariat debranching enzyme (536 aa).

A divalent metal cation is bound by residues C8, H10, D39, and N84. Positions 124–154 (SGIFKSHDYRKGHFECPPYNQQTIRSAYHVR) are lariat recognition loop. H174, H226, and H228 together coordinate a divalent metal cation. A disordered region spans residues 388–536 (EEGSVRGEYE…YAAEDEDEAK (149 aa)). A compositionally biased stretch (polar residues) spans 414-426 (EYNTDNSGLSSIN). The span at 430–441 (IMLDDEGGDEDL) shows a compositional bias: acidic residues. Positions 484-504 (ELEKSGVNKQVEEKSLNERPL) are enriched in basic and acidic residues.

This sequence belongs to the lariat debranching enzyme family. It depends on Fe(2+) as a cofactor. Zn(2+) serves as cofactor. Requires Mn(2+) as cofactor.

The protein resides in the nucleus. Its activity is regulated as follows. Active in presence of diverse metals including Fe(2+), Zn(2+), Mn(2+). Also activated by Ca(2+). Binds two metal cations in two adjacent alpha and beta metal-binding pockets. In terms of biological role, cleaves the 2'-5' phosphodiester linkage at the branch point of excised lariat intron RNA and converts them into linear molecules that can be subsequently degraded, thereby facilitating ribonucleotide turnover. Linked to its role in pre-mRNA processing mechanism, may also participate in retrovirus replication and have an antiviral cell-intrinsic defense function. The protein is Lariat debranching enzyme (DBR1) of Gallus gallus (Chicken).